The chain runs to 503 residues: Probable cytosol aminopeptidase (503 aa).

The Mn(2+) site is built by Lys-274 and Asp-279. Lys-286 is a catalytic residue. The Mn(2+) site is built by Asp-297, Asp-356, and Glu-358. Arg-360 is a catalytic residue.

The protein belongs to the peptidase M17 family. Requires Mn(2+) as cofactor.

It is found in the cytoplasm. It catalyses the reaction Release of an N-terminal amino acid, Xaa-|-Yaa-, in which Xaa is preferably Leu, but may be other amino acids including Pro although not Arg or Lys, and Yaa may be Pro. Amino acid amides and methyl esters are also readily hydrolyzed, but rates on arylamides are exceedingly low.. The catalysed reaction is Release of an N-terminal amino acid, preferentially leucine, but not glutamic or aspartic acids.. Presumably involved in the processing and regular turnover of intracellular proteins. Catalyzes the removal of unsubstituted N-terminal amino acids from various peptides. The polypeptide is Probable cytosol aminopeptidase (Burkholderia orbicola (strain AU 1054)).